The sequence spans 910 residues: Exonuclease mut-7 (910 aa).

Positions 404-605 (IHMVKTESEM…TFKKILSIVE (202 aa)) constitute a 3'-5' exonuclease domain.

This sequence belongs to the mut-7 family. Mg(2+) serves as cofactor.

Represses the transposition of Tc1, Tc3, Tc4, and Tc5, perhaps by degrading transposon-specific messages. Also affects sperm development, sensitivity to RNAi of mainly germline expressed genes, silencing of some germline transgenes, X chromosome loss, and is required for cosuppression (functional silencing of chromosomal loci induced by transgenes) and for silencing induced by antisense RNA oligomers. The protein is Exonuclease mut-7 (mut-7) of Caenorhabditis elegans.